The chain runs to 83 residues: Small ribosomal subunit protein bS16 (83 aa).

Belongs to the bacterial ribosomal protein bS16 family.

In Azotobacter vinelandii (strain DJ / ATCC BAA-1303), this protein is Small ribosomal subunit protein bS16.